The sequence spans 377 residues: DNA primase small subunit PriS (377 aa).

Active-site residues include Asp-99, Asp-101, and Asp-274.

It belongs to the eukaryotic-type primase small subunit family. As to quaternary structure, heterodimer of a small subunit (PriS) and a large subunit (PriL). Mg(2+) is required as a cofactor. Mn(2+) serves as cofactor.

Functionally, catalytic subunit of DNA primase, an RNA polymerase that catalyzes the synthesis of short RNA molecules used as primers for DNA polymerase during DNA replication. The small subunit contains the primase catalytic core and has DNA synthesis activity on its own. Binding to the large subunit stabilizes and modulates the activity, increasing the rate of DNA synthesis while decreasing the length of the DNA fragments, and conferring RNA synthesis capability. The DNA polymerase activity may enable DNA primase to also catalyze primer extension after primer synthesis. May also play a role in DNA repair. The sequence is that of DNA primase small subunit PriS from Staphylothermus marinus (strain ATCC 43588 / DSM 3639 / JCM 9404 / F1).